The sequence spans 186 residues: CoB--CoM heterodisulfide reductase iron-sulfur subunit C 2 (186 aa).

4Fe-4S ferredoxin-type domains are found at residues 26–56 and 67–99; these read GEDI…AYRT and LDDV…TEII. Cysteine 36, cysteine 39, cysteine 42, cysteine 46, cysteine 79, cysteine 82, cysteine 85, and cysteine 89 together coordinate [4Fe-4S] cluster.

The protein belongs to the HdrC family. In terms of assembly, the heterodisulfide reductase is composed of three subunits; HdrA, HdrB and HdrC. [4Fe-4S] cluster is required as a cofactor.

It functions in the pathway cofactor metabolism; coenzyme M-coenzyme B heterodisulfide reduction; coenzyme B and coenzyme M from coenzyme M-coenzyme B heterodisulfide: step 1/1. Its function is as follows. Part of a complex that catalyzes the reversible reduction of CoM-S-S-CoB to the thiol-coenzymes H-S-CoM (coenzyme M) and H-S-CoB (coenzyme B). The protein is CoB--CoM heterodisulfide reductase iron-sulfur subunit C 2 (hdrC2) of Methanocaldococcus jannaschii (strain ATCC 43067 / DSM 2661 / JAL-1 / JCM 10045 / NBRC 100440) (Methanococcus jannaschii).